Reading from the N-terminus, the 165-residue chain is Shikimate kinase (165 aa).

11–16 (GAGKTT) contacts ATP. Thr15 lines the Mg(2+) pocket. Positions 33, 57, and 78 each coordinate substrate. Arg116 serves as a coordination point for ATP. Arg134 is a binding site for substrate.

The protein belongs to the shikimate kinase family. In terms of assembly, monomer. Mg(2+) is required as a cofactor.

Its subcellular location is the cytoplasm. The enzyme catalyses shikimate + ATP = 3-phosphoshikimate + ADP + H(+). The protein operates within metabolic intermediate biosynthesis; chorismate biosynthesis; chorismate from D-erythrose 4-phosphate and phosphoenolpyruvate: step 5/7. Catalyzes the specific phosphorylation of the 3-hydroxyl group of shikimic acid using ATP as a cosubstrate. The polypeptide is Shikimate kinase (Bacillus anthracis (strain A0248)).